A 680-amino-acid chain; its full sequence is DNA-directed RNA polymerase subunit beta' (680 aa).

Cys69, Cys71, Cys87, and Cys90 together coordinate Zn(2+). Mg(2+) contacts are provided by Asp489, Asp491, and Asp493.

It belongs to the RNA polymerase beta' chain family. RpoC1 subfamily. In terms of assembly, in plastids the minimal PEP RNA polymerase catalytic core is composed of four subunits: alpha, beta, beta', and beta''. When a (nuclear-encoded) sigma factor is associated with the core the holoenzyme is formed, which can initiate transcription. Mg(2+) is required as a cofactor. Requires Zn(2+) as cofactor.

The protein localises to the plastid. The protein resides in the chloroplast. It catalyses the reaction RNA(n) + a ribonucleoside 5'-triphosphate = RNA(n+1) + diphosphate. Its function is as follows. DNA-dependent RNA polymerase catalyzes the transcription of DNA into RNA using the four ribonucleoside triphosphates as substrates. This chain is DNA-directed RNA polymerase subunit beta', found in Olimarabidopsis pumila (Dwarf rocket).